The following is a 332-amino-acid chain: Glyceraldehyde-3-phosphate dehydrogenase 1 (332 aa).

NAD(+) contacts are provided by residues 11–12 (RI), Asp32, and Arg77. Residues 148–150 (SCT), Thr179, 208–209 (TG), and Arg231 contribute to the D-glyceraldehyde 3-phosphate site. Cys149 acts as the Nucleophile in catalysis. Asn313 lines the NAD(+) pocket.

The protein belongs to the glyceraldehyde-3-phosphate dehydrogenase family. In terms of assembly, homotetramer.

The protein resides in the cytoplasm. The catalysed reaction is D-glyceraldehyde 3-phosphate + phosphate + NAD(+) = (2R)-3-phospho-glyceroyl phosphate + NADH + H(+). The protein operates within carbohydrate degradation; glycolysis; pyruvate from D-glyceraldehyde 3-phosphate: step 1/5. In Drosophila melanogaster (Fruit fly), this protein is Glyceraldehyde-3-phosphate dehydrogenase 1 (Gapdh1).